Here is a 311-residue protein sequence, read N- to C-terminus: Ribosomal protein L11 methyltransferase (311 aa).

Residues threonine 162, glycine 183, aspartate 205, and asparagine 248 each contribute to the S-adenosyl-L-methionine site.

Belongs to the methyltransferase superfamily. PrmA family.

The protein localises to the cytoplasm. It catalyses the reaction L-lysyl-[protein] + 3 S-adenosyl-L-methionine = N(6),N(6),N(6)-trimethyl-L-lysyl-[protein] + 3 S-adenosyl-L-homocysteine + 3 H(+). In terms of biological role, methylates ribosomal protein L11. The chain is Ribosomal protein L11 methyltransferase from Bacillus velezensis (strain DSM 23117 / BGSC 10A6 / LMG 26770 / FZB42) (Bacillus amyloliquefaciens subsp. plantarum).